The sequence spans 172 residues: 3-hydroxydecanoyl-[acyl-carrier-protein] dehydratase (172 aa).

His71 is an active-site residue.

It belongs to the thioester dehydratase family. FabA subfamily. In terms of assembly, homodimer.

Its subcellular location is the cytoplasm. It catalyses the reaction a (3R)-hydroxyacyl-[ACP] = a (2E)-enoyl-[ACP] + H2O. It carries out the reaction (3R)-hydroxydecanoyl-[ACP] = (2E)-decenoyl-[ACP] + H2O. The enzyme catalyses (2E)-decenoyl-[ACP] = (3Z)-decenoyl-[ACP]. It functions in the pathway lipid metabolism; fatty acid biosynthesis. Functionally, necessary for the introduction of cis unsaturation into fatty acids. Catalyzes the dehydration of (3R)-3-hydroxydecanoyl-ACP to E-(2)-decenoyl-ACP and then its isomerization to Z-(3)-decenoyl-ACP. Can catalyze the dehydratase reaction for beta-hydroxyacyl-ACPs with saturated chain lengths up to 16:0, being most active on intermediate chain length. The protein is 3-hydroxydecanoyl-[acyl-carrier-protein] dehydratase of Klebsiella pneumoniae subsp. pneumoniae (strain ATCC 700721 / MGH 78578).